The chain runs to 455 residues: MNCEVKHALHCAVLVAWIVCFAYFCGVFTEPAEGTVPESPVASYGLVWTICLYLLRFTALLVLPQCLCNLCGLMMFNAFREKVQLKAAPLLSPFVCFRVVTKGNFPLLVKENIDANMKTCFEAGMENFIFEVVTDKAINLPPNPRVREVVVPTAYRTKSGAKFKARALQYCLEDDVNILQPTDWIVHLDEETLLTTNAICGILNFCEDGKHQFGQGVITYANGDIVNWLTTLSDSFRVADDMGKLRFQFKLFHKPLFGWKGSYVVTQVEAERDVSYDHGMEGSIAEDCFFSMVAMKHGYTFDFIEGEMHEKSPFTMWDFLQQRKRWLQGILLTVHSSKIAVVHKALLALSLYAWATMPLTSLQVFLCPLFPLPRCLPFDFLLSFVGALNLYMYIFGVVKSFSHKYRNSFLRLGMYLAGALMTIPFNILIENAAVLVGMFGRKDQFYIVNKDIQTV.

Belongs to the glycosyltransferase 2 family.

Its subcellular location is the cytoplasm. The protein operates within protein modification; protein glycosylation. Glycosyltransferase with a proposed role in glycosphingolipid biosynthesis. Involved in susceptibility to pore-forming crystal toxins in conjunction with bre-1, bre-2 and bre-4. Involved in resistance to the nematotoxic C.cinerea galectin Cgl2. Has a role in determining brood size. This is Beta-1,4-mannosyltransferase bre-3 from Caenorhabditis briggsae.